The chain runs to 768 residues: Actin filament-associated protein 1-like 1 (768 aa).

Residues 83-145 (LRDMSDDGEP…GKSPEYISSH (63 aa)) form a disordered region. Serine 87, serine 93, serine 97, serine 103, and serine 153 each carry phosphoserine. The segment covering 165 to 185 (SYPTTRMNGELKNSYNDSDAM) has biased composition (polar residues). A disordered region spans residues 165-211 (SYPTTRMNGELKNSYNDSDAMSSSYESYDEEEEEEKGRQPKHQWPSE). Residues 220-316 (DCRICAFLLR…WLKVIREVSR (97 aa)) form the PH 1 domain. Residues serine 329 and serine 343 each carry the phosphoserine modification. Residues 340 to 349 (KRLSQEKQNS) show a composition bias toward basic and acidic residues. A disordered region spans residues 340–382 (KRLSQEKQNSDSDSLGMNDSGSTLGRREACEHGKGKKNSLAEL). Residues 350–362 (DSDSLGMNDSGST) are compositionally biased toward polar residues. One can recognise a PH 2 domain in the interval 418–512 (EVPCCGYLNV…WLGLLLVEMG (95 aa)). The residue at position 557 (tyrosine 557) is a Phosphotyrosine. The tract at residues 564–609 (KVQDEEPQRPTGAQVKRHASSCSEKSHRADPQVKVKRHASSANQYK) is disordered. Over residues 587–596 (EKSHRADPQV) the composition is skewed to basic and acidic residues. Positions 611–701 (GKNRAEEDAR…AVKERLQQSL (91 aa)) form a coiled coil. Positions 705-768 (PALGLSVSNK…KAKEWEMKKT (64 aa)) are disordered. The span at 710–734 (SVSNKNKSQDTTNKPQSNAPEQSLP) shows a compositional bias: polar residues. Serine 747 is subject to Phosphoserine. The segment covering 759 to 768 (KAKEWEMKKT) has biased composition (basic and acidic residues).

As to quaternary structure, interacts with CTTN.

It is found in the cytoplasm. The protein resides in the cell projection. It localises to the podosome. The protein localises to the invadopodium. Its subcellular location is the cytoskeleton. It is found in the stress fiber. May be involved in podosome and invadosome formation. This is Actin filament-associated protein 1-like 1 (Afap1l1) from Mus musculus (Mouse).